Consider the following 427-residue polypeptide: Glutamate-1-semialdehyde 2,1-aminomutase (427 aa).

Lys265 carries the N6-(pyridoxal phosphate)lysine modification.

It belongs to the class-III pyridoxal-phosphate-dependent aminotransferase family. HemL subfamily. As to quaternary structure, homodimer. The cofactor is pyridoxal 5'-phosphate.

It is found in the cytoplasm. It catalyses the reaction (S)-4-amino-5-oxopentanoate = 5-aminolevulinate. It functions in the pathway porphyrin-containing compound metabolism; protoporphyrin-IX biosynthesis; 5-aminolevulinate from L-glutamyl-tRNA(Glu): step 2/2. This is Glutamate-1-semialdehyde 2,1-aminomutase from Neisseria meningitidis serogroup B (strain ATCC BAA-335 / MC58).